The sequence spans 161 residues: MTTSFWRIATDARTYEADDLSGAGAKITGGRWNEVGVAIVYAASSRALACLETVVHLNSGGLPLNRYLVEIEVPDEVLASAEVATPGNLPVGWDAEPAGRVSISFGSQWAQSQRTALLLVPSVIVPEETNLLINPAHPDAKGIKARKVRKWLYDPRMIRKA.

The protein belongs to the MbcT/ParT/Res family. As to quaternary structure, homodimer, forms heterotetrameric ParS(2)-ParT(2) complexes. In terms of processing, consumes NAD(+) and auto-ADP-ribosylates on the tryptic fragment Ala-47-Arg-66 in vitro. Also auto-ADP-ribosylates using NADP(+).

Its function is as follows. Toxic component of a type II toxin-antitoxin (TA) system. Expression in E.coli inhibits cell growth; bacteriostasis is neutralized by expression of cognate antitoxin ParS. ADP-ribosylates E.coli ribose-phosphate pyrophosphokinase (RPPK, prs) using NAD(+) in vitro; ADP-ribosylates RPPK on 'Lys-182' and 'Ser-202'. Cannot use NADP(+). Also auto-ADP-ribosylates in vitro; in the presence of RPPK auto-ADP-ribosylation decreases. The sequence is that of Prs ADP-ribosylating toxin from Sphingobium sp. (strain YBL2).